The following is a 239-amino-acid chain: Small ribosomal subunit protein uS2 (239 aa).

The protein belongs to the universal ribosomal protein uS2 family.

The polypeptide is Small ribosomal subunit protein uS2 (Prochlorococcus marinus (strain MIT 9303)).